Reading from the N-terminus, the 171-residue chain is Disulfide bond formation protein B (171 aa).

The Cytoplasmic portion of the chain corresponds to 1 to 8; the sequence is MQWSYRFV. A helical transmembrane segment spans residues 9 to 25; the sequence is SGLLVLASIVGMTFALY. Over 26 to 43 the chain is Periplasmic; that stretch reads LEHFKGLEPCPLCIFQRV. A disulfide bridge connects residues Cys-35 and Cys-38. A helical transmembrane segment spans residues 44–60; that stretch reads GLMAMGIVALIAFLHNP. The Cytoplasmic portion of the chain corresponds to 61–67; sequence VSNAFKR. The chain crosses the membrane as a helical span at residues 68–85; it reads VYAFLATLGILWSVGVAI. At 86 to 142 the chain is on the periplasmic side; sequence RHVWLQTLPPDQVPSCGPGLNYLLDALPLKTVLQQVLQGSGECAAIHWTFLGQSLPV. Cys-101 and Cys-128 are oxidised to a cystine. A helical membrane pass occupies residues 143–161; it reads WSLAYFSLILLVCVWQLLR. Over 162-171 the chain is Cytoplasmic; sequence RYPVIVTKKK.

This sequence belongs to the DsbB family.

The protein localises to the cell inner membrane. Functionally, required for disulfide bond formation in some periplasmic proteins. Acts by oxidizing the DsbA protein. The polypeptide is Disulfide bond formation protein B (Acinetobacter baylyi (strain ATCC 33305 / BD413 / ADP1)).